Consider the following 375-residue polypeptide: 23S rRNA (uracil(747)-C(5))-methyltransferase RlmC (375 aa).

Positions 3, 11, 14, and 87 each coordinate [4Fe-4S] cluster. Gln212, Phe241, Glu262, and Asn307 together coordinate S-adenosyl-L-methionine. Catalysis depends on Cys334, which acts as the Nucleophile.

This sequence belongs to the class I-like SAM-binding methyltransferase superfamily. RNA M5U methyltransferase family. RlmC subfamily.

The catalysed reaction is uridine(747) in 23S rRNA + S-adenosyl-L-methionine = 5-methyluridine(747) in 23S rRNA + S-adenosyl-L-homocysteine + H(+). Catalyzes the formation of 5-methyl-uridine at position 747 (m5U747) in 23S rRNA. The polypeptide is 23S rRNA (uracil(747)-C(5))-methyltransferase RlmC (Cronobacter sakazakii (strain ATCC BAA-894) (Enterobacter sakazakii)).